The following is a 226-amino-acid chain: B-cell antigen receptor complex-associated protein alpha chain (226 aa).

The signal sequence occupies residues 1–32 (MPGGPGVLQALPATIFLLFLLSAVYLGPGCQA). Residues 33 to 116 (LWMHKVPASL…RVQEGNESYQ (84 aa)) enclose the Ig-like C2-type domain. Residues 33-143 (LWMHKVPASL…LDMGEGTKNR (111 aa)) lie on the Extracellular side of the membrane. A disulfide bridge links C54 with C106. N57, N63, N73, N88, N97, and N112 each carry an N-linked (GlcNAc...) asparagine glycan. The chain crosses the membrane as a helical span at residues 144–165 (IITAEGIILLFCAVVPGTLLLF). At 166–226 (RKRWQNEKLG…NIGDVQLEKP (61 aa)) the chain is on the cytoplasmic side. The ITAM domain maps to 177–205 (DAGDEYEDENLYEGLNLDDCSMYEDISRG). 2 positions are modified to phosphotyrosine; by SRC-type Tyr-kinases: Y188 and Y199. Asymmetric dimethylarginine; by PRMT1 is present on R204. Y210 carries the phosphotyrosine; by Tyr-kinases modification.

As to quaternary structure, heterodimer of alpha and beta chains; disulfide-linked. Part of the B-cell antigen receptor complex where the alpha/beta chain heterodimer is non-covalently associated with an antigen-specific membrane-bound surface immunoglobulin of two heavy chains and two light chains. Interacts through its phosphorylated ITAM domain with the SH2 domains of SYK which stimulates SYK autophosphorylation and activation. Also interacts, when phosphorylated on Tyr-210, with the SH2 domain of BLNK/SLP65, bringing BLNK into proximity with SYK and allowing SYK to phosphorylate BLNK which is necessary for trafficking of the BCR to late endosomes. Interacts with Src-family tyrosine kinases including FYN and LYN, increasing their activity. Phosphorylated on tyrosine, serine and threonine residues upon B-cell activation. Phosphorylation of tyrosine residues by Src-family kinases is an early and essential feature of the BCR signaling cascade. The phosphorylated tyrosines serve as docking sites for SH2-domain containing kinases, leading to their activation which in turn leads to phosphorylation of downstream targets. Phosphorylated by LYN. Phosphorylation of serine and threonine residues may prevent subsequent tyrosine phosphorylation. In terms of processing, arginine methylation in the ITAM domain may interfere with the binding of SYK. It promotes signals leading to B-cell differentiation. In terms of tissue distribution, B-cells.

It is found in the cell membrane. Required in cooperation with CD79B for initiation of the signal transduction cascade activated by binding of antigen to the B-cell antigen receptor complex (BCR) which leads to internalization of the complex, trafficking to late endosomes and antigen presentation. Also required for BCR surface expression and for efficient differentiation of pro- and pre-B-cells. Stimulates SYK autophosphorylation and activation. Binds to BLNK, bringing BLNK into proximity with SYK and allowing SYK to phosphorylate BLNK. Also interacts with and increases activity of some Src-family tyrosine kinases. Represses BCR signaling during development of immature B-cells. This chain is B-cell antigen receptor complex-associated protein alpha chain (CD79A), found in Homo sapiens (Human).